Reading from the N-terminus, the 745-residue chain is Meiotic driver SPOK3 (745 aa).

Residues 4–34 (KDRITQLLRELEEAKAREAQERCEKERLQLE) are a coiled coil. Disordered regions lie at residues 173-222 (ELTQ…DGVG) and 407-487 (LSSA…VDPQ). Positions 188 to 197 (TSDRSLERRQ) are enriched in basic and acidic residues. Composition is skewed to polar residues over residues 208–217 (KSKYICSNRQ) and 409–422 (SAPS…SEYT). A required for antidote activity region spans residues 214–325 (SNRQPDGVGI…LLLYVDRDDW (112 aa)). Residues 466–482 (AKRERGPSSGGKDDGRS) are compositionally biased toward basic and acidic residues. Residues 491–745 (QYCTQACLLG…SPMATPSHGG (255 aa)) form a required for poison activity region.

Its subcellular location is the cytoplasm. It is found in the nucleus. Its function is as follows. Promotes unequal transmission of alleles from the parental zygote to progeny spores by acting as poison/antidote system, leading to poisoning of progeny that do not inherit the allele. May possess DNA nuclease activity that leads to spore killing, and a kinase activity that confers resistance to the nuclease activity. This chain is Meiotic driver SPOK3, found in Podospora anserina (Pleurage anserina).